The chain runs to 217 residues: Nascent polypeptide-associated complex subunit alpha-like protein 2 (217 aa).

The disordered stretch occupies residues 1-81 (MSPPPAVVTE…SEKKSRKAML (81 aa)). The segment covering 37 to 60 (PIVEDVKDDEDDDDDDEEEEDDDA) has biased composition (acidic residues). The 66-residue stretch at 70 to 135 (SRSEKKSRKA…AKIEDLSSQL (66 aa)) folds into the NAC-A/B domain. In terms of domain architecture, UBA spans 178 to 215 (VEARDIDLVMTQAGVSRSKAVKALKSHDGDIVSAIMEL).

This sequence belongs to the NAC-alpha family.

Its function is as follows. May promote appropriate targeting of ribosome-nascent polypeptide complexes. The chain is Nascent polypeptide-associated complex subunit alpha-like protein 2 from Arabidopsis thaliana (Mouse-ear cress).